The primary structure comprises 152 residues: Transcriptional regulator MraZ (152 aa).

SpoVT-AbrB domains lie at 5–52 (ATLV…PLPA) and 81–124 (ASEC…DEQT).

This sequence belongs to the MraZ family. As to quaternary structure, forms oligomers.

It localises to the cytoplasm. The protein localises to the nucleoid. Functionally, negatively regulates its own expression and that of the subsequent genes in the proximal part of the division and cell wall (dcw) gene cluster. Acts by binding directly to DNA. May also regulate the expression of genes outside the dcw cluster. This is Transcriptional regulator MraZ from Sodalis glossinidius (strain morsitans).